Reading from the N-terminus, the 398-residue chain is Cyclic GMP-AMP synthase-like receptor (398 aa).

ATP is bound by residues Ser-57 and 69–71 (EFD). The Mg(2+) site is built by Glu-69, Asp-71, and Asp-192. GTP-binding positions include Asp-192 and 240 to 247 (SLSFQEQE). ATP contacts are provided by residues 244–247 (QEQE), Lys-265, and 277–281 (SYYIK). Mn(2+) is bound by residues Ile-288, Glu-289, and Asp-292.

Belongs to the mab-21 family. Mg(2+) serves as cofactor. The cofactor is Mn(2+).

It catalyses the reaction GTP + ATP = 2',3'-cGAMP + 2 diphosphate. The enzyme catalyses GTP + ATP = pppGp(2'-5')A + diphosphate. It carries out the reaction pppGp(2'-5')A = 2',3'-cGAMP + diphosphate. Its activity is regulated as follows. The enzyme activity is specifically activated by double-stranded RNA (dsRNA). Functionally, nucleotidyltransferase that catalyzes the formation of cyclic GMP-AMP (2',3'-cGAMP) from ATP and GTP and plays a key role in innate immunity. Acts as a key sensor of double-stranded RNA (dsRNA), the presence of dsRNA in the cytoplasm being a danger signal that triggers the immune responses. Directly binds dsRNA, activating the nucleotidyltransferase activity, leading to synthesis of 2',3'-cGAMP, a second messenger that binds to and activates Sting, thereby triggering the antiviral immune response via activation of the NF-kappa-B transcription factor Rel (Relish). This is Cyclic GMP-AMP synthase-like receptor from Tribolium castaneum (Red flour beetle).